The following is a 153-amino-acid chain: UPF0260 protein YcgN (153 aa).

Belongs to the UPF0260 family.

This Shigella flexneri serotype 5b (strain 8401) protein is UPF0260 protein YcgN.